The following is a 354-amino-acid chain: Histidinol-phosphate aminotransferase (354 aa).

The residue at position 208 (Lys208) is an N6-(pyridoxal phosphate)lysine.

Belongs to the class-II pyridoxal-phosphate-dependent aminotransferase family. Histidinol-phosphate aminotransferase subfamily. As to quaternary structure, homodimer. It depends on pyridoxal 5'-phosphate as a cofactor.

The catalysed reaction is L-histidinol phosphate + 2-oxoglutarate = 3-(imidazol-4-yl)-2-oxopropyl phosphate + L-glutamate. Its pathway is amino-acid biosynthesis; L-histidine biosynthesis; L-histidine from 5-phospho-alpha-D-ribose 1-diphosphate: step 7/9. The polypeptide is Histidinol-phosphate aminotransferase (Aquifex aeolicus (strain VF5)).